Consider the following 1315-residue polypeptide: Myopalladin (1315 aa).

Disordered regions lie at residues 19–60 (SYLA…DLPD), 81–145 (INHD…TQSK), 166–204 (HSSK…TERR), and 230–266 (EAKR…LGQP). 2 stretches are compositionally biased toward basic and acidic residues: residues 23–35 (ETRH…RSRA) and 84–104 (DPLE…DQTK). 2 positions are modified to phosphoserine: serine 99 and serine 129. Residues 166–180 (HSSKRIRPRACKNHK) are compositionally biased toward basic residues. The span at 184–199 (ESQNKVLQENSPTFSD) shows a compositional bias: polar residues. Positions 219–240 (DNELNHAIEQREAKRREAELAA) form a coiled coil. Residue threonine 249 is modified to Phosphothreonine. An Ig-like 1 domain is found at 267 to 357 (PRFTQKLRSR…DSTSAEIYIE (91 aa)). An intrachain disulfide couples cysteine 288 to cysteine 339. The segment at 359 to 392 (VSSSDSEGDPNKEEMNRIQKPNEVSSPPTTSAAI) is disordered. In terms of domain architecture, Ig-like 2 spans 432 to 528 (PVFTKMLQNL…GTVSSIAQLD (97 aa)). Cysteine 453 and cysteine 512 form a disulfide bridge. Disordered stretches follow at residues 535-652 (ISDN…VLAK), 674-704 (LQNT…SSKQ), and 725-747 (SSTS…NTPQ). A compositionally biased stretch (polar residues) spans 609-623 (SSGSGAANTSQTRPN). A Phosphoserine modification is found at serine 641. The span at 725–741 (SSTSTATVSPSSSPVFT) shows a compositional bias: low complexity. Serine 754 carries the phosphoserine modification. Disordered stretches follow at residues 762 to 814 (HPST…TPVS) and 840 to 865 (NAMG…KAPQ). A compositionally biased stretch (pro residues) spans 779–790 (PAPPSPAEPAAP). A phosphoserine mark is found at serine 809 and serine 814. 2 positions are modified to phosphoserine: serine 903 and serine 924. Ig-like domains lie at 941 to 1025 (PIFD…GRIS), 1068 to 1157 (PHFL…LELT), and 1167 to 1257 (PVIL…ARLD). Cysteine 1089 and cysteine 1141 are disulfide-bonded.

It belongs to the myotilin/palladin family. As to quaternary structure, interacts with TTN/titin, NEB, NEBL, ACTN2 and CARP.

The protein resides in the cytoplasm. It is found in the nucleus. It localises to the myofibril. Its subcellular location is the sarcomere. The protein localises to the z line. In terms of biological role, component of the sarcomere that tethers together nebulin (skeletal muscle) and nebulette (cardiac muscle) to alpha-actinin, at the Z lines. The protein is Myopalladin (Mypn) of Mus musculus (Mouse).